The sequence spans 450 residues: Probable ECA polymerase (450 aa).

Helical transmembrane passes span 6 to 26, 37 to 57, 63 to 83, 118 to 138, 155 to 175, 181 to 201, 207 to 227, 228 to 248, 341 to 361, 378 to 398, and 410 to 430; these read FSGLFVVWLLCTLFIATLTWF, VFFSLLFLLTFFFGFPLTSVL, VGVAPPEILLQALLSAGCFYA, VILMGIALVSVGIFFMHNGFL, GVALKRFFYFFIPAMLVVYFL, AWLFFLVSTVAFGLLTYMIVG, IIIAFAIFLFIGIIRGWISLW, MLAAAGVLGIVGMFWLALKRY, LVVMGGALFIPLGAIVVGLII, YKAAILHSFCFGAIFNMIVLA, and VFFIVVFGACLMIAKLLYWLF.

The protein belongs to the WzyE family. As to quaternary structure, probably part of a complex composed of WzxE, WzyE and WzzE.

The protein localises to the cell inner membrane. It functions in the pathway bacterial outer membrane biogenesis; enterobacterial common antigen biosynthesis. Probably involved in the polymerization of enterobacterial common antigen (ECA) trisaccharide repeat units. This is Probable ECA polymerase from Shigella sonnei (strain Ss046).